An 86-amino-acid polypeptide reads, in one-letter code: Exodeoxyribonuclease 7 small subunit (86 aa).

Positions 1–26 (MQDELFETEKAPQKNAKNAKNAPKKS) are disordered.

The protein belongs to the XseB family. Heterooligomer composed of large and small subunits.

The protein localises to the cytoplasm. It carries out the reaction Exonucleolytic cleavage in either 5'- to 3'- or 3'- to 5'-direction to yield nucleoside 5'-phosphates.. Its function is as follows. Bidirectionally degrades single-stranded DNA into large acid-insoluble oligonucleotides, which are then degraded further into small acid-soluble oligonucleotides. The chain is Exodeoxyribonuclease 7 small subunit from Helicobacter pylori (strain J99 / ATCC 700824) (Campylobacter pylori J99).